The following is a 383-amino-acid chain: Ribosomal RNA large subunit methyltransferase G (383 aa).

This sequence belongs to the methyltransferase superfamily. RlmG family.

The protein resides in the cytoplasm. It catalyses the reaction guanosine(1835) in 23S rRNA + S-adenosyl-L-methionine = N(2)-methylguanosine(1835) in 23S rRNA + S-adenosyl-L-homocysteine + H(+). In terms of biological role, specifically methylates the guanine in position 1835 (m2G1835) of 23S rRNA. The protein is Ribosomal RNA large subunit methyltransferase G of Shewanella denitrificans (strain OS217 / ATCC BAA-1090 / DSM 15013).